Reading from the N-terminus, the 101-residue chain is Ribonuclease P protein component 1 (101 aa).

Belongs to the eukaryotic/archaeal RNase P protein component 1 family. Consists of a catalytic RNA component and at least 4-5 protein subunits.

It localises to the cytoplasm. The enzyme catalyses Endonucleolytic cleavage of RNA, removing 5'-extranucleotides from tRNA precursor.. Its function is as follows. Part of ribonuclease P, a protein complex that generates mature tRNA molecules by cleaving their 5'-ends. In Methanococcoides burtonii (strain DSM 6242 / NBRC 107633 / OCM 468 / ACE-M), this protein is Ribonuclease P protein component 1.